Consider the following 146-residue polypeptide: Transcriptional regulator MraZ (146 aa).

2 consecutive SpoVT-AbrB domains span residues 5–48 (TSYH…TLEE) and 77–120 (ASEC…SRAK).

The protein belongs to the MraZ family. As to quaternary structure, forms oligomers.

It localises to the cytoplasm. The protein localises to the nucleoid. This Desulfosudis oleivorans (strain DSM 6200 / JCM 39069 / Hxd3) (Desulfococcus oleovorans) protein is Transcriptional regulator MraZ.